A 239-amino-acid polypeptide reads, in one-letter code: Uridylate kinase (239 aa).

Lys-13–Gly-16 serves as a coordination point for ATP. Gly-55 contributes to the UMP binding site. ATP-binding residues include Gly-56 and Arg-60. Residues Asp-75 and Thr-136–Thr-143 contribute to the UMP site. ATP is bound by residues Thr-163, Gln-164, Tyr-169, and Asp-172.

It belongs to the UMP kinase family. As to quaternary structure, homohexamer.

The protein resides in the cytoplasm. The catalysed reaction is UMP + ATP = UDP + ADP. Its pathway is pyrimidine metabolism; CTP biosynthesis via de novo pathway; UDP from UMP (UMPK route): step 1/1. With respect to regulation, inhibited by UTP. In terms of biological role, catalyzes the reversible phosphorylation of UMP to UDP. The polypeptide is Uridylate kinase (Bartonella henselae (strain ATCC 49882 / DSM 28221 / CCUG 30454 / Houston 1) (Rochalimaea henselae)).